Consider the following 155-residue polypeptide: Regulatory protein RecX (155 aa).

The protein belongs to the RecX family.

The protein resides in the cytoplasm. Modulates RecA activity. In Pseudomonas savastanoi pv. phaseolicola (strain 1448A / Race 6) (Pseudomonas syringae pv. phaseolicola (strain 1448A / Race 6)), this protein is Regulatory protein RecX.